Consider the following 404-residue polypeptide: Acetate kinase (404 aa).

Position 9 (asparagine 9) interacts with Mg(2+). Lysine 16 is an ATP binding site. Arginine 100 contributes to the substrate binding site. Residue aspartate 157 is the Proton donor/acceptor of the active site. Residues 215 to 219 (HLGNG), 290 to 292 (DMR), and 335 to 339 (GIGEN) each bind ATP. Glutamate 386 is a binding site for Mg(2+).

The protein belongs to the acetokinase family. In terms of assembly, homodimer. The cofactor is Mg(2+). It depends on Mn(2+) as a cofactor.

Its subcellular location is the cytoplasm. It carries out the reaction acetate + ATP = acetyl phosphate + ADP. It participates in metabolic intermediate biosynthesis; acetyl-CoA biosynthesis; acetyl-CoA from acetate: step 1/2. Catalyzes the formation of acetyl phosphate from acetate and ATP. Can also catalyze the reverse reaction. This is Acetate kinase from Methylocella silvestris (strain DSM 15510 / CIP 108128 / LMG 27833 / NCIMB 13906 / BL2).